The chain runs to 113 residues: Protein translation factor SUI1 homolog (113 aa).

It belongs to the SUI1 family.

Functionally, probably involved in translation. This is Protein translation factor SUI1 homolog from Salix bakko (Japanese willow).